The following is a 95-amino-acid chain: Small ribosomal subunit protein uS19 (95 aa).

A disordered region spans residues 76 to 95 (PTRRFGGHADKKAATKGQVR).

This sequence belongs to the universal ribosomal protein uS19 family.

In terms of biological role, protein S19 forms a complex with S13 that binds strongly to the 16S ribosomal RNA. The protein is Small ribosomal subunit protein uS19 of Pseudothermotoga lettingae (strain ATCC BAA-301 / DSM 14385 / NBRC 107922 / TMO) (Thermotoga lettingae).